Consider the following 953-residue polypeptide: Ubiquitin carboxyl-terminal hydrolase CYLD (953 aa).

Positions 106–590 (CEERLSLFRN…LEIMIGKKKG (485 aa)) are interaction with TRIP. 2 CAP-Gly domains span residues 153 to 198 (LAER…VFVA) and 253 to 286 (DVLP…VQLC). Positions 318 to 350 (FMSRGVGDKGSSSHNKPKVTGSTSDPGSRNRSE) are disordered. Residues 327–346 (GSSSHNKPKVTGSTSDPGSR) are compositionally biased toward polar residues. Phosphoserine is present on S384. The segment at 387 to 410 (EMSSDFGHSSPPPQPPSMNSLSSE) is disordered. An interaction with TRAF2 region spans residues 391–466 (DFGHSSPPPQ…MPSSSGNAHG (76 aa)). 2 positions are modified to phosphoserine: S415 and S419. Residues 467–681 (LEVGSLAEVK…FTSEEKDPEE (215 aa)) are interaction with IKBKG/NEMO. In terms of domain architecture, CAP-Gly 3 spans 489–532 (GQPPGLSDVLAGLELEDECAGCTDGTFRGTRYFTCALKKALFVK). A USP domain is found at 589–947 (KGIQGHYNSC…DAYMCMYQSP (359 aa)). C598 serves as the catalytic Nucleophile. The B-box stretch occupies residues 778 to 830 (LEDTPRQCRICGGLAMYECRECYDDPDISAGKIKQFCKTCSTQVHLHPRRLNH). C785, C788, C796, C799, C814, C817, H822, and H830 together coordinate Zn(2+). The active-site Proton acceptor is H868.

The protein belongs to the peptidase C19 family. As to quaternary structure, interacts (via CAP-Gly domain) with IKBKG/NEMO (via proline-rich C-terminal region). Interacts with TRAF2 and TRIP. Interacts with PLK1, DVL1, DVL3, MAVS, TBK1, IKKE and RIGI. Interacts (via CAP-Gly domain) with microtubules. Interacts with HDAC6 and BCL3. Interacts with MAP3K7. Identified in a complex with TRAF6 and SQSTM1. Interacts with OPTN and SQSTM1. Interacts with CEP350. Interacts with RNF31; the interaction is indirect and is mediated via SPATA2. Interacts with SPATA2 (via the PUB domain); the interaction is direct and recruits CYLD to the LUBAC complex, thereby regulating TNF-alpha-induced necroptosis. Phosphorylated on several serine residues by IKKA and/or IKKB in response to immune stimuli. Phosphorylation requires IKBKG. Phosphorylation abolishes TRAF2 deubiquitination, interferes with the activation of Jun kinases, and strongly reduces CD40-dependent gene activation by NF-kappa-B. Post-translationally, ubiquitinated. Polyubiquitinated in hepatocytes treated with palmitic acid. Ubiquitination is mediated by E3 ligase TRIM47 and leads to proteasomal degradation.

Its subcellular location is the cytoplasm. The protein localises to the perinuclear region. It localises to the cytoskeleton. The protein resides in the cell membrane. It is found in the microtubule organizing center. Its subcellular location is the centrosome. The protein localises to the spindle. It localises to the cilium basal body. It carries out the reaction Thiol-dependent hydrolysis of ester, thioester, amide, peptide and isopeptide bonds formed by the C-terminal Gly of ubiquitin (a 76-residue protein attached to proteins as an intracellular targeting signal).. Its function is as follows. Deubiquitinase that specifically cleaves 'Lys-63'- and linear 'Met-1'-linked polyubiquitin chains and is involved in NF-kappa-B activation and TNF-alpha-induced necroptosis. Negatively regulates NF-kappa-B activation by deubiquitinating upstream signaling factors. Contributes to the regulation of cell survival, proliferation and differentiation via its effects on NF-kappa-B activation. Negative regulator of Wnt signaling. Inhibits HDAC6 and thereby promotes acetylation of alpha-tubulin and stabilization of microtubules. Plays a role in the regulation of microtubule dynamics, and thereby contributes to the regulation of cell proliferation, cell polarization, cell migration, and angiogenesis. Required for normal cell cycle progress and normal cytokinesis. Inhibits nuclear translocation of NF-kappa-B. Plays a role in the regulation of inflammation and the innate immune response, via its effects on NF-kappa-B activation. Dispensable for the maturation of intrathymic natural killer cells, but required for the continued survival of immature natural killer cells. Negatively regulates TNFRSF11A signaling and osteoclastogenesis. Involved in the regulation of ciliogenesis, allowing ciliary basal bodies to migrate and dock to the plasma membrane; this process does not depend on NF-kappa-B activation. Ability to remove linear ('Met-1'-linked) polyubiquitin chains regulates innate immunity and TNF-alpha-induced necroptosis: recruited to the LUBAC complex via interaction with SPATA2 and restricts linear polyubiquitin formation on target proteins. Regulates innate immunity by restricting linear polyubiquitin formation on RIPK2 in response to NOD2 stimulation. Involved in TNF-alpha-induced necroptosis by removing linear ('Met-1'-linked) polyubiquitin chains from RIPK1, thereby regulating the kinase activity of RIPK1. Negatively regulates intestinal inflammation by removing 'Lys-63' linked polyubiquitin chain of NLRP6, thereby reducing the interaction between NLRP6 and PYCARD/ASC and formation of the NLRP6 inflammasome. Does not catalyze deubiquitination of heterotypic 'Lys-63'-/'Lys-48'-linked branched ubiquitin chains. Removes 'Lys-63' linked polyubiquitin chain of MAP3K7, which inhibits phosphorylation and blocks downstream activation of the JNK-p38 kinase cascades. Also removes 'Lys-63'-linked polyubiquitin chains of MAP3K1 and MA3P3K3, which inhibit their interaction with MAP2K1 and MAP2K2. The chain is Ubiquitin carboxyl-terminal hydrolase CYLD (Cyld) from Rattus norvegicus (Rat).